The following is a 26-amino-acid chain: LLCISCCVSITECCQLMSGCAVEIKS.

In terms of processing, contains 3 disulfide bonds. In terms of tissue distribution, expressed by the venom duct.

It localises to the secreted. Acts as a neurotoxin by inhibiting an ion channel. In Iotyrris olangoensis (Sea snail), this protein is Turripeptide OL49.